Reading from the N-terminus, the 302-residue chain is Methionyl-tRNA formyltransferase (302 aa).

108 to 111 contacts (6S)-5,6,7,8-tetrahydrofolate; that stretch reads SILP.

Belongs to the Fmt family.

It carries out the reaction L-methionyl-tRNA(fMet) + (6R)-10-formyltetrahydrofolate = N-formyl-L-methionyl-tRNA(fMet) + (6S)-5,6,7,8-tetrahydrofolate + H(+). In terms of biological role, attaches a formyl group to the free amino group of methionyl-tRNA(fMet). The formyl group appears to play a dual role in the initiator identity of N-formylmethionyl-tRNA by promoting its recognition by IF2 and preventing the misappropriation of this tRNA by the elongation apparatus. The polypeptide is Methionyl-tRNA formyltransferase (Sulfurimonas denitrificans (strain ATCC 33889 / DSM 1251) (Thiomicrospira denitrificans (strain ATCC 33889 / DSM 1251))).